The following is a 332-amino-acid chain: CRISPR-associated endonuclease Cas1 3 (332 aa).

Glu159, His224, and Glu239 together coordinate Mn(2+).

The protein belongs to the CRISPR-associated endonuclease Cas1 family. In terms of assembly, homodimer, forms a heterotetramer with a Cas2 homodimer. Requires Mg(2+) as cofactor. The cofactor is Mn(2+).

In terms of biological role, CRISPR (clustered regularly interspaced short palindromic repeat), is an adaptive immune system that provides protection against mobile genetic elements (viruses, transposable elements and conjugative plasmids). CRISPR clusters contain spacers, sequences complementary to antecedent mobile elements, and target invading nucleic acids. CRISPR clusters are transcribed and processed into CRISPR RNA (crRNA). Acts as a dsDNA endonuclease. Involved in the integration of spacer DNA into the CRISPR cassette. The polypeptide is CRISPR-associated endonuclease Cas1 3 (Thermus thermophilus (strain ATCC 27634 / DSM 579 / HB8)).